A 552-amino-acid chain; its full sequence is C-type lectin receptor-like tyrosine-protein kinase At1g52310 (552 aa).

The first 27 residues, 1–27 (MELKWVSCRKQSLFLISCLALLCLASL), serve as a signal peptide directing secretion. The Extracellular portion of the chain corresponds to 28–201 (DTISCESTQN…DIKCRNCHKY (174 aa)). Residues N37, N59, N69, N106, N118, N137, N154, N169, and N180 are each glycosylated (N-linked (GlcNAc...) asparagine). The C-type lectin domain occupies 59–188 (NQTKCYAYFK…CNASHAFVCA (130 aa)). 2 disulfide bridges follow: C80/C187 and C164/C179. The chain crosses the membrane as a helical span at residues 202-222 (LVILAVVSGLILFTTFAIILW). Residues 223 to 552 (LLVYKRSKKR…QQLVQPLEVK (330 aa)) lie on the Cytoplasmic side of the membrane. The Protein kinase domain occupies 268–546 (SEANRLAGDA…HVVHQLQQLV (279 aa)). ATP contacts are provided by residues 274-282 (AGDAKTGGT) and K296. The active-site Proton acceptor is the D394.

This sequence belongs to the protein kinase superfamily. Tyr protein kinase family.

Its subcellular location is the cell membrane. The enzyme catalyses L-tyrosyl-[protein] + ATP = O-phospho-L-tyrosyl-[protein] + ADP + H(+). In Arabidopsis thaliana (Mouse-ear cress), this protein is C-type lectin receptor-like tyrosine-protein kinase At1g52310.